Consider the following 399-residue polypeptide: Glutamyl-tRNA reductase (399 aa).

Substrate-binding positions include 45–48, Ser93, 98–100, and Gln104; these read TCNR and EDQ. Residue Cys46 is the Nucleophile of the active site. 173-178 contributes to the NADP(+) binding site; it reads GAGKMG.

The protein belongs to the glutamyl-tRNA reductase family. As to quaternary structure, homodimer.

The enzyme catalyses (S)-4-amino-5-oxopentanoate + tRNA(Glu) + NADP(+) = L-glutamyl-tRNA(Glu) + NADPH + H(+). It participates in porphyrin-containing compound metabolism; protoporphyrin-IX biosynthesis; 5-aminolevulinate from L-glutamyl-tRNA(Glu): step 1/2. Its function is as follows. Catalyzes the NADPH-dependent reduction of glutamyl-tRNA(Glu) to glutamate 1-semialdehyde (GSA). In Methanobrevibacter smithii (strain ATCC 35061 / DSM 861 / OCM 144 / PS), this protein is Glutamyl-tRNA reductase.